A 545-amino-acid polypeptide reads, in one-letter code: Threonine--tRNA ligase catalytic subunit (545 aa).

The catalytic stretch occupies residues 139–433 (DHRLIGEKLD…LLEHFKGKLP (295 aa)). Cys-231, His-282, and His-410 together coordinate Zn(2+).

Belongs to the class-II aminoacyl-tRNA synthetase family. In terms of assembly, homodimer. Probably interacts with its editing subunit. The cofactor is Zn(2+).

It localises to the cytoplasm. The catalysed reaction is tRNA(Thr) + L-threonine + ATP = L-threonyl-tRNA(Thr) + AMP + diphosphate + H(+). Catalyzes the attachment of threonine to tRNA(Thr) in a two-step reaction: L-threonine is first activated by ATP to form Thr-AMP and then transferred to the acceptor end of tRNA(Thr). Also activates L-serine and transfers it to tRNA(Thr) but cannot deacylate incorrectly charged amino acid; unlike most archaea the editing function is found in a freestanding protein. In Saccharolobus islandicus (strain M.16.4 / Kamchatka #3) (Sulfolobus islandicus), this protein is Threonine--tRNA ligase catalytic subunit.